The sequence spans 55 residues: MRDLKTYLSVAPVLSTLWFGSLAGLLIEINRFFPDALTFPFFLIRVIVAGRGEKD.

Residues 7 to 27 traverse the membrane as a helical segment; the sequence is YLSVAPVLSTLWFGSLAGLLI.

This sequence belongs to the PsaJ family.

The protein resides in the plastid. It is found in the chloroplast thylakoid membrane. Its function is as follows. May help in the organization of the PsaE and PsaF subunits. The polypeptide is Photosystem I reaction center subunit IX (Gossypium barbadense (Sea Island cotton)).